Here is a 470-residue protein sequence, read N- to C-terminus: ATP synthase subunit beta (470 aa).

Residue 158-165 (GGAGVGKT) participates in ATP binding.

This sequence belongs to the ATPase alpha/beta chains family. In terms of assembly, F-type ATPases have 2 components, CF(1) - the catalytic core - and CF(0) - the membrane proton channel. CF(1) has five subunits: alpha(3), beta(3), gamma(1), delta(1), epsilon(1). CF(0) has three main subunits: a(1), b(2) and c(9-12). The alpha and beta chains form an alternating ring which encloses part of the gamma chain. CF(1) is attached to CF(0) by a central stalk formed by the gamma and epsilon chains, while a peripheral stalk is formed by the delta and b chains.

It is found in the cell membrane. The enzyme catalyses ATP + H2O + 4 H(+)(in) = ADP + phosphate + 5 H(+)(out). In terms of biological role, produces ATP from ADP in the presence of a proton gradient across the membrane. The catalytic sites are hosted primarily by the beta subunits. The sequence is that of ATP synthase subunit beta from Halalkalibacterium halodurans (strain ATCC BAA-125 / DSM 18197 / FERM 7344 / JCM 9153 / C-125) (Bacillus halodurans).